The chain runs to 92 residues: MNKSELINIISKKSNLSKIQIKNILEITLTAIIQSLKDGNSVQLVGFGTFKVNNRAARIGRNPQTGQTIHISATKTPVFISGKTFKTAIKTI.

The protein belongs to the bacterial histone-like protein family. Homodimer.

In terms of biological role, histone-like DNA-binding protein which is capable of wrapping DNA to stabilize it, and thus to prevent its denaturation under extreme environmental conditions. The chain is DNA-binding protein HU (hup) from Buchnera aphidicola subsp. Baizongia pistaciae (strain Bp).